The primary structure comprises 334 residues: Phosphate acyltransferase (334 aa).

It belongs to the PlsX family. As to quaternary structure, homodimer. Probably interacts with PlsY.

It is found in the cytoplasm. It catalyses the reaction a fatty acyl-[ACP] + phosphate = an acyl phosphate + holo-[ACP]. The protein operates within lipid metabolism; phospholipid metabolism. Its function is as follows. Catalyzes the reversible formation of acyl-phosphate (acyl-PO(4)) from acyl-[acyl-carrier-protein] (acyl-ACP). This enzyme utilizes acyl-ACP as fatty acyl donor, but not acyl-CoA. This Mycoplasmopsis agalactiae (strain NCTC 10123 / CIP 59.7 / PG2) (Mycoplasma agalactiae) protein is Phosphate acyltransferase.